We begin with the raw amino-acid sequence, 378 residues long: SWI/SNF-related matrix-associated actin-dependent regulator of chromatin subfamily B member 1 (378 aa).

The interval 1-106 (MIMALSKTFG…DEKYKAVSIS (106 aa)) is DNA-binding.

Belongs to the SNF5 family. As to quaternary structure, component of the multiprotein chromatin-remodeling complexes SWI/SNF. Component of neural progenitors-specific chromatin remodeling complex (npBAF complex) and the neuron-specific chromatin remodeling complex (nBAF complex). Component of the BAF (SWI/SNF) chromatin remodeling complex. Component of the SWI/SNF-B (PBAF) chromatin remodeling complex. Binds to double-stranded DNA.

Its subcellular location is the nucleus. In terms of biological role, involved in chromatin-remodeling. Core component of the BAF (SWI/SNF) complex. This ATP-dependent chromatin-remodeling complex plays important roles in cell proliferation and differentiation, in cellular antiviral activities and inhibition of tumor formation. Belongs to the neural progenitors-specific chromatin remodeling complex (npBAF complex) and the neuron-specific chromatin remodeling complex (nBAF complex) and may play a role in neural development. This chain is SWI/SNF-related matrix-associated actin-dependent regulator of chromatin subfamily B member 1 (smarcb1), found in Xenopus laevis (African clawed frog).